The chain runs to 188 residues: MATYTTSDFKPGLKFMQDGEPCVIVENEFVKPGKGQAFTRTRIRKLISGKVLDVNFKSGTSVEAADVMDLNLTYSYKDDAFWYFMHPETFEQYSADAKAVGDAEKWLLDQADCVVTLWNGAPITVTPPNFVELEIVDTDPGLKGDTAGTGGKPATLSTGAVVKVPLFVQIGEVIRVDTRSGEYVSRVK.

An N6-(3,6-diaminohexanoyl)-5-hydroxylysine modification is found at lysine 34.

This sequence belongs to the elongation factor P family. In terms of processing, may be beta-lysylated on the epsilon-amino group of Lys-34 by the combined action of EpmA and EpmB, and then hydroxylated on the C5 position of the same residue by EpmC (if this protein is present). Lysylation is critical for the stimulatory effect of EF-P on peptide-bond formation. The lysylation moiety may extend toward the peptidyltransferase center and stabilize the terminal 3-CCA end of the tRNA. Hydroxylation of the C5 position on Lys-34 may allow additional potential stabilizing hydrogen-bond interactions with the P-tRNA.

The protein localises to the cytoplasm. Its pathway is protein biosynthesis; polypeptide chain elongation. Its function is as follows. Involved in peptide bond synthesis. Alleviates ribosome stalling that occurs when 3 or more consecutive Pro residues or the sequence PPG is present in a protein, possibly by augmenting the peptidyl transferase activity of the ribosome. Modification of Lys-34 is required for alleviation. This chain is Elongation factor P, found in Haemophilus influenzae (strain PittGG).